Reading from the N-terminus, the 430-residue chain is 3-deoxy-D-manno-octulosonic acid transferase (430 aa).

A helical; Signal-anchor transmembrane segment spans residues 12-32 (AFLVAAFLAAAPRIFYKVVFH). Catalysis depends on E66, which acts as the Proton acceptor. CMP contacts are provided by residues 274-275 (PR), 314-316 (MGI), and 341-344 (NLLE).

Belongs to the glycosyltransferase group 1 family. Glycosyltransferase 30 subfamily.

Its subcellular location is the cell inner membrane. It catalyses the reaction lipid IVA (E. coli) + CMP-3-deoxy-beta-D-manno-octulosonate = alpha-Kdo-(2-&gt;6)-lipid IVA (E. coli) + CMP + H(+). The catalysed reaction is alpha-Kdo-(2-&gt;6)-lipid IVA (E. coli) + CMP-3-deoxy-beta-D-manno-octulosonate = alpha-Kdo-(2-&gt;4)-alpha-Kdo-(2-&gt;6)-lipid IVA (E. coli) + CMP + H(+). The enzyme catalyses alpha-Kdo-(2-&gt;4)-alpha-Kdo-(2-&gt;6)-lipid IVA (E. coli) + CMP-3-deoxy-beta-D-manno-octulosonate = alpha-Kdo-(2-&gt;8)-alpha-Kdo-(2-&gt;4)-alpha-Kdo-(2-&gt;6)-lipid IVA (E. coli) + CMP + H(+). The protein operates within bacterial outer membrane biogenesis; LPS core biosynthesis. Functionally, involved in lipopolysaccharide (LPS) biosynthesis. Catalyzes the transfer of three 3-deoxy-D-manno-octulosonate (Kdo) residues from CMP-Kdo to lipid IV(A), the tetraacyldisaccharide-1,4'-bisphosphate precursor of lipid A. Thus generates the genus-specific LPS epitope of Chlamydia, composed of the trisaccharide alpha-Kdo-(2-&gt;8)-alpha-Kdo-(2-&gt;4)-alpha-Kdo. The sequence is that of 3-deoxy-D-manno-octulosonic acid transferase (waaA) from Chlamydia muridarum (strain MoPn / Nigg).